Here is a 217-residue protein sequence, read N- to C-terminus: Glycosylphosphatidylinositol anchor biosynthesis protein 11 (217 aa).

The next 6 membrane-spanning stretches (helical) occupy residues 45-61 (TWQT…YWFI), 74-94 (WLLV…ATVY), 111-131 (VTCI…GAPF), 138-158 (TWLL…SVLN), 169-189 (YFIS…LDWD), and 195-215 (WPIP…TFCS).

The protein belongs to the PIGF family.

The protein localises to the endoplasmic reticulum membrane. The protein operates within glycolipid biosynthesis; glycosylphosphatidylinositol-anchor biosynthesis. Its function is as follows. Acts in the GPI biosynthetic pathway between GlcNAc-PI synthesis and GPI transfer to protein. The polypeptide is Glycosylphosphatidylinositol anchor biosynthesis protein 11 (GPI11) (Eremothecium gossypii (strain ATCC 10895 / CBS 109.51 / FGSC 9923 / NRRL Y-1056) (Yeast)).